The following is a 503-amino-acid chain: Maturase K (503 aa).

The protein belongs to the intron maturase 2 family. MatK subfamily.

The protein localises to the plastid. It localises to the chloroplast. Functionally, usually encoded in the trnK tRNA gene intron. Probably assists in splicing its own and other chloroplast group II introns. The chain is Maturase K from Kunzea pulchella (Red kunzea).